We begin with the raw amino-acid sequence, 118 residues long: UPF0102 protein lpp3065 (118 aa).

The protein belongs to the UPF0102 family.

This is UPF0102 protein lpp3065 from Legionella pneumophila (strain Paris).